The sequence spans 687 residues: Acetyl-coenzyme A synthetase 2 (687 aa).

Residues 206–209 (RGGK) and Thr-325 each bind CoA. Residues 401 to 403 (GEP), 425 to 430 (DTMWQT), Asp-516, and Arg-531 contribute to the ATP site. A CoA-binding site is contributed by Ser-539. Arg-542 contacts ATP. Residue Arg-617 participates in CoA binding.

This sequence belongs to the ATP-dependent AMP-binding enzyme family.

The catalysed reaction is acetate + ATP + CoA = acetyl-CoA + AMP + diphosphate. The polypeptide is Acetyl-coenzyme A synthetase 2 (ACS2) (Eremothecium gossypii (strain ATCC 10895 / CBS 109.51 / FGSC 9923 / NRRL Y-1056) (Yeast)).